The primary structure comprises 125 residues: Small ribosomal subunit protein eS8 (125 aa).

It belongs to the eukaryotic ribosomal protein eS8 family. As to quaternary structure, part of the 30S ribosomal subunit.

The sequence is that of Small ribosomal subunit protein eS8 from Methanocella arvoryzae (strain DSM 22066 / NBRC 105507 / MRE50).